Here is a 141-residue protein sequence, read N- to C-terminus: Holo-[acyl-carrier-protein] synthase (141 aa).

Residues D7 and E57 each coordinate Mg(2+).

Belongs to the P-Pant transferase superfamily. AcpS family. The cofactor is Mg(2+).

Its subcellular location is the cytoplasm. The catalysed reaction is apo-[ACP] + CoA = holo-[ACP] + adenosine 3',5'-bisphosphate + H(+). Its function is as follows. Transfers the 4'-phosphopantetheine moiety from coenzyme A to a Ser of acyl-carrier-protein. The polypeptide is Holo-[acyl-carrier-protein] synthase (Corynebacterium efficiens (strain DSM 44549 / YS-314 / AJ 12310 / JCM 11189 / NBRC 100395)).